The sequence spans 131 residues: Universal stress protein C (131 aa).

It belongs to the universal stress protein A family.

The protein resides in the cytoplasm. Its function is as follows. Required for resistance to DNA-damaging agents. The protein is Universal stress protein C (uspC) of Salmonella typhi.